Reading from the N-terminus, the 219-residue chain is Orotate phosphoribosyltransferase (219 aa).

Lysine 26 is a binding site for 5-phospho-alpha-D-ribose 1-diphosphate. 34–35 (FF) contacts orotate. 5-phospho-alpha-D-ribose 1-diphosphate is bound by residues 72–73 (YK), arginine 98, lysine 99, lysine 102, histidine 104, and 124–132 (DDVITAGTA). Orotate-binding residues include threonine 128 and arginine 156.

This sequence belongs to the purine/pyrimidine phosphoribosyltransferase family. PyrE subfamily. Homodimer. Requires Mg(2+) as cofactor.

It carries out the reaction orotidine 5'-phosphate + diphosphate = orotate + 5-phospho-alpha-D-ribose 1-diphosphate. Its pathway is pyrimidine metabolism; UMP biosynthesis via de novo pathway; UMP from orotate: step 1/2. Its function is as follows. Catalyzes the transfer of a ribosyl phosphate group from 5-phosphoribose 1-diphosphate to orotate, leading to the formation of orotidine monophosphate (OMP). In Xanthomonas euvesicatoria pv. vesicatoria (strain 85-10) (Xanthomonas campestris pv. vesicatoria), this protein is Orotate phosphoribosyltransferase.